The following is a 126-amino-acid chain: Glycerol dehydrogenase small subunit (126 aa).

4 helical membrane-spanning segments follow: residues 13 to 33 (WLTLLLGVIVLLVGLFFVIGG), 41 to 61 (GSTYYVLCGILLVASGVFMLM), 67 to 87 (AFLYLGALAYTWVWSFWEVGF), and 92 to 112 (LLPRAFGPTILGILVALTIPV).

It is found in the cell membrane. The enzyme catalyses glycerol + A = dihydroxyacetone + AH2. Its function is as follows. Catalyzes the oxidation of glycerol to glycerone. Also acts, more slowly, on a number of other polyols including D-sorbitol, D-arabinitol, D-mannitol, meso-erythritol, adonitol and propylene glycol. This chain is Glycerol dehydrogenase small subunit (sldB), found in Gluconobacter thailandicus.